Reading from the N-terminus, the 152-residue chain is Arginine repressor (152 aa).

It belongs to the ArgR family.

The protein resides in the cytoplasm. It functions in the pathway amino-acid biosynthesis; L-arginine biosynthesis [regulation]. Functionally, regulates arginine biosynthesis genes. This chain is Arginine repressor, found in Thermotoga sp. (strain RQ2).